The sequence spans 34 residues: Aspartate aminotransferase 2 (34 aa).

Belongs to the class-I pyridoxal-phosphate-dependent aminotransferase family. As to quaternary structure, homodimer. It depends on pyridoxal 5'-phosphate as a cofactor.

It catalyses the reaction L-aspartate + 2-oxoglutarate = oxaloacetate + L-glutamate. Its function is as follows. Important for the metabolism of amino acids and Krebs-cycle related organic acids. In plants, it is involved in nitrogen metabolism and in aspects of carbon and energy metabolism. The sequence is that of Aspartate aminotransferase 2 from Pseudotsuga menziesii (Douglas-fir).